Consider the following 353-residue polypeptide: MKFLDEAKVYIRSGDGGNGCVAFRREKFIEFGGPNGGNGGRGGDIIVEAADGLNTLIDYRYQQHFKAQKGGNGMGSDRHGAGGKDIVMKVPVGTQIFDEDKETLIHDFTKVGERFVLAKGGNGGFGNAHFKSSTNRAPRHANPGLPGEERWIWLRLKLIADAGLVGLPNAGKSTFLSKVSAAKPKIADYPFTTLHPQLGVVNSDGREFVLADIPGLIEGAHEGAGLGDRFLGHIERCRVLLHLIDATCEHAGKAYKTVRGELEAYAETLVDKIEIVALNKIDAVEPDELKKQKDRLKRAAKKTPLLLSGVTGQGVPEALRALVAVIGEAPVSDKAIGTADNPAEAKPWAPQDA.

An Obg domain is found at 1-159 (MKFLDEAKVY…RWIWLRLKLI (159 aa)). An OBG-type G domain is found at 160 to 327 (ADAGLVGLPN…ALRALVAVIG (168 aa)). GTP contacts are provided by residues 166–173 (GLPNAGKS), 191–195 (FTTLH), 212–215 (DIPG), 279–282 (NKID), and 308–310 (SGV). Positions 173 and 193 each coordinate Mg(2+).

This sequence belongs to the TRAFAC class OBG-HflX-like GTPase superfamily. OBG GTPase family. Monomer. Mg(2+) serves as cofactor.

It is found in the cytoplasm. An essential GTPase which binds GTP, GDP and possibly (p)ppGpp with moderate affinity, with high nucleotide exchange rates and a fairly low GTP hydrolysis rate. Plays a role in control of the cell cycle, stress response, ribosome biogenesis and in those bacteria that undergo differentiation, in morphogenesis control. In Rhodopseudomonas palustris (strain ATCC BAA-98 / CGA009), this protein is GTPase Obg.